Consider the following 89-residue polypeptide: Myrmicitoxin(1)-Pr2a (89 aa).

Residues 1 to 23 form the signal peptide; the sequence is MEIPKLLYIAVIAIGLSGSLTCA. A propeptide spanning residues 24–61 is cleaved from the precursor; the sequence is TPLANPWADPEAEANPEAKAIAEATAEAIAEALAEPEP. Asparagine 88 is subject to Asparagine amide.

This sequence belongs to the formicidae venom clade 1 family. As to expression, expressed by the venom gland.

Its subcellular location is the secreted. In terms of biological role, vertebrate-selective toxin that causes pain by targeting voltage-gated sodium channels. This chain is Myrmicitoxin(1)-Pr2a, found in Pogonomyrmex rugosus (Desert harvester ant).